The chain runs to 166 residues: Lipoprotein signal peptidase (166 aa).

A run of 3 helical transmembrane segments spans residues 10–30 (LIWL…KAWV), 68–88 (WQLW…AFWL), and 94–114 (GHWR…GNVI). Catalysis depends on residues Asp-124 and Asp-142. The helical transmembrane segment at 138–158 (FNIADSAIVGGAIGIAVFGLF) threads the bilayer.

This sequence belongs to the peptidase A8 family.

The protein localises to the cell inner membrane. It carries out the reaction Release of signal peptides from bacterial membrane prolipoproteins. Hydrolyzes -Xaa-Yaa-Zaa-|-(S,diacylglyceryl)Cys-, in which Xaa is hydrophobic (preferably Leu), and Yaa (Ala or Ser) and Zaa (Gly or Ala) have small, neutral side chains.. It participates in protein modification; lipoprotein biosynthesis (signal peptide cleavage). Its function is as follows. This protein specifically catalyzes the removal of signal peptides from prolipoproteins. The protein is Lipoprotein signal peptidase of Xanthomonas oryzae pv. oryzae (strain MAFF 311018).